The chain runs to 207 residues: Outer-membrane lipoprotein carrier protein (207 aa).

Positions Met-1 to Ala-21 are cleaved as a signal peptide.

The protein belongs to the LolA family. In terms of assembly, monomer.

It is found in the periplasm. In terms of biological role, participates in the translocation of lipoproteins from the inner membrane to the outer membrane. Only forms a complex with a lipoprotein if the residue after the N-terminal Cys is not an aspartate (The Asp acts as a targeting signal to indicate that the lipoprotein should stay in the inner membrane). In Pseudomonas fluorescens (strain ATCC BAA-477 / NRRL B-23932 / Pf-5), this protein is Outer-membrane lipoprotein carrier protein.